The primary structure comprises 249 residues: Probable transcriptional regulatory protein Tfu_2096 (249 aa).

Belongs to the TACO1 family.

It localises to the cytoplasm. The polypeptide is Probable transcriptional regulatory protein Tfu_2096 (Thermobifida fusca (strain YX)).